A 120-amino-acid chain; its full sequence is Ribonuclease P protein component (120 aa).

The protein belongs to the RnpA family. In terms of assembly, consists of a catalytic RNA component (M1 or rnpB) and a protein subunit.

The enzyme catalyses Endonucleolytic cleavage of RNA, removing 5'-extranucleotides from tRNA precursor.. Its function is as follows. RNaseP catalyzes the removal of the 5'-leader sequence from pre-tRNA to produce the mature 5'-terminus. It can also cleave other RNA substrates such as 4.5S RNA. The protein component plays an auxiliary but essential role in vivo by binding to the 5'-leader sequence and broadening the substrate specificity of the ribozyme. The chain is Ribonuclease P protein component from Chlamydia trachomatis serovar L2 (strain ATCC VR-902B / DSM 19102 / 434/Bu).